A 204-amino-acid chain; its full sequence is Large ribosomal subunit protein bL25 (204 aa).

The protein belongs to the bacterial ribosomal protein bL25 family. CTC subfamily. As to quaternary structure, part of the 50S ribosomal subunit; part of the 5S rRNA/L5/L18/L25 subcomplex. Contacts the 5S rRNA. Binds to the 5S rRNA independently of L5 and L18.

Functionally, this is one of the proteins that binds to the 5S RNA in the ribosome where it forms part of the central protuberance. This chain is Large ribosomal subunit protein bL25, found in Burkholderia pseudomallei (strain 668).